The sequence spans 380 residues: E3 ubiquitin-protein ligase RNF13 (380 aa).

A signal peptide spans 1–34; the sequence is MLLSIGMLMLSATQVYTILTVQLFAFLNLLPVEA. Residues 35-182 lie on the Lumenal side of the membrane; the sequence is DILAYNFENA…VPELSLPLEY (148 aa). A PA domain is found at 64–160; that stretch reads LKGFLINSKP…GESSANSLKD (97 aa). Asn88 is a glycosylation site (N-linked (GlcNAc...) asparagine). The chain crosses the membrane as a helical span at residues 183-203; that stretch reads YLIPFLIIVGICLILIVIFMI. Residues 204 to 380 are Cytoplasmic-facing; the sequence is TKFVQDRHRN…EPDYNIANTV (177 aa). The segment at 240–282 adopts an RING-type; atypical zinc-finger fold; sequence CAICLEEYEDGDKLRILPCSHAYHCKCVDPWLTKTKKTCPVCK. A disordered region spans residues 285–380; the sequence is VVPSQGDSDS…EPDYNIANTV (96 aa). The segment covering 338–356 has biased composition (acidic residues); sequence SDYEDDDNEETDSSDADNE.

In terms of assembly, interacts with ERN1. Autoubiquitinated.

It is found in the endoplasmic reticulum membrane. It localises to the late endosome membrane. The protein localises to the lysosome membrane. Its subcellular location is the nucleus inner membrane. It carries out the reaction S-ubiquitinyl-[E2 ubiquitin-conjugating enzyme]-L-cysteine + [acceptor protein]-L-lysine = [E2 ubiquitin-conjugating enzyme]-L-cysteine + N(6)-ubiquitinyl-[acceptor protein]-L-lysine.. It functions in the pathway protein modification; protein ubiquitination. In terms of biological role, E3 ubiquitin-protein ligase that regulates cell proliferation. Involved in apoptosis regulation. Mediates ER stress-induced activation of JNK signaling pathway and apoptosis by promoting ERN1 activation and splicing of XBP1 mRNA. Also involved in protein trafficking and localization. This is E3 ubiquitin-protein ligase RNF13 (Rnf13) from Rattus norvegicus (Rat).